The primary structure comprises 680 residues: MTEDNAQLRRTWNDLAEKVRYHRDRYYNEQPEIPDADFDALFKQLQQLEEDHPELAVPDSPTMVVGAPVAEQSSFDNVEHLERMLSLDNVFDEQELRDWLGRTPAKQYLTELKIDGLSIDLVYRNGQLERAATRGDGRVGEDITANARVIEDIPHQLQGTDEYPVPAVLEIRGEVFITVEDFPEVNAQRIADGGKPFANPRNAAAGSLRQKNIEDVKKRRLRMISHGIGFTEGFSPASQHDAYLALAAWGLPTSPYTEAVTDPEDVVKKVSYWADHRHDALHEMDGLVIKVDDIASQRALGSTSRAPRWAIAYKYPPEEVTTKLLDIQVGVGRTGRVTPFAVMEPVLVAGSTVSMATLHNQSEVKRKGVLIGDTVVIRKAGEVIPEVLGPVVELRDGTEREYIFPTLCPECGTRLAPAKADDVDWRCPNMQSCPGQLSTRLTYLAGRGAFDIEALGEKGAEDLIRTGILLDESGLFDLTEDDLLSSNVYTTNAGKVNASGKKLLDNLQKSKQTDLWRVLVALSIRHVGPTAARALAGRYHSIQALIDAPLEELSETDGVGTIIAQSFKDWFEVDWHKAIVDKWAAAGVTMEEEVGEVAEQTLEGLTIVVTGGLEGFTRDSVKEAIISRGGKASGSVSKKTDYVVIGENAGSKATKAEELGLRILDEAGFVRLLNTGSADE.

Residues 35 to 39, 86 to 87, and Glu111 contribute to the NAD(+) site; these read DADFD and SL. Lys113 acts as the N6-AMP-lysine intermediate in catalysis. NAD(+) is bound by residues Arg134, Glu174, Lys290, and Lys314. 4 residues coordinate Zn(2+): Cys408, Cys411, Cys427, and Cys433. Residues 597–680 enclose the BRCT domain; it reads VAEQTLEGLT…RLLNTGSADE (84 aa).

Belongs to the NAD-dependent DNA ligase family. LigA subfamily. The cofactor is Mg(2+). It depends on Mn(2+) as a cofactor.

The enzyme catalyses NAD(+) + (deoxyribonucleotide)n-3'-hydroxyl + 5'-phospho-(deoxyribonucleotide)m = (deoxyribonucleotide)n+m + AMP + beta-nicotinamide D-nucleotide.. DNA ligase that catalyzes the formation of phosphodiester linkages between 5'-phosphoryl and 3'-hydroxyl groups in double-stranded DNA using NAD as a coenzyme and as the energy source for the reaction. It is essential for DNA replication and repair of damaged DNA. The protein is DNA ligase of Corynebacterium glutamicum (strain ATCC 13032 / DSM 20300 / JCM 1318 / BCRC 11384 / CCUG 27702 / LMG 3730 / NBRC 12168 / NCIMB 10025 / NRRL B-2784 / 534).